The sequence spans 518 residues: Hyccin (518 aa).

Disordered stretches follow at residues 385–410 (GLRRLTGRSSKEKDKEKDAATGMDQL) and 466–492 (VFSGNQPSSRASSPTSNHVAEQDEGVA). Residues 393 to 403 (SSKEKDKEKDA) show a composition bias toward basic and acidic residues. The span at 466-484 (VFSGNQPSSRASSPTSNHV) shows a compositional bias: polar residues.

Belongs to the Hyccin family. In terms of assembly, component of a phosphatidylinositol 4-kinase (PI4K) complex.

Its subcellular location is the cytoplasm. It is found in the cytosol. It localises to the cell membrane. Component of a complex required to localize phosphatidylinositol 4-kinase (PI4K) to the plasma membrane. The complex acts as a regulator of phosphatidylinositol 4-phosphate (PtdIns(4)P) synthesis. The sequence is that of Hyccin (hycc1) from Danio rerio (Zebrafish).